Here is a 585-residue protein sequence, read N- to C-terminus: Protein FAM151A (585 aa).

A helical membrane pass occupies residues 14–34 (WVFASITCVSAVAIAAIVLAI).

Belongs to the menorin family.

Its subcellular location is the membrane. The sequence is that of Protein FAM151A (FAM151A) from Pongo abelii (Sumatran orangutan).